The following is a 25-amino-acid chain: Secapin-1 (25 aa).

C9 and C20 are oxidised to a cystine.

Expressed by the venom gland.

Its subcellular location is the secreted. Functionally, serine protease inhibitor which exhibits antifibrinolytic, antielastolytic and antimicrobial activities. Displays antimicrobial activity against bacteria and fungi. Likely functions in the innate immune response to microbial infection and possibly in the venom, as an antifibrinolytic agent. This chain is Secapin-1, found in Apis mellifera (Honeybee).